The chain runs to 227 residues: Threonine--tRNA ligase (227 aa).

Residues 1-120 (DIELKLSTRP…LIEHYEGAFP (120 aa)) are catalytic.

It belongs to the class-II aminoacyl-tRNA synthetase family. Homodimer.

It localises to the cytoplasm. The enzyme catalyses tRNA(Thr) + L-threonine + ATP = L-threonyl-tRNA(Thr) + AMP + diphosphate + H(+). In terms of biological role, catalyzes the attachment of threonine to tRNA(Thr) in a two-step reaction: L-threonine is first activated by ATP to form Thr-AMP and then transferred to the acceptor end of tRNA(Thr). Also edits incorrectly charged L-seryl-tRNA(Thr). This chain is Threonine--tRNA ligase, found in Pseudomonas syringae pv. syringae.